Consider the following 252-residue polypeptide: Small ribosomal subunit protein uS2B (252 aa).

N-acetylserine is present on Ser-2. Composition is skewed to acidic residues over residues 213 to 229 (VAEE…EEVK) and 241 to 252 (EWAEENADNVEW). The disordered stretch occupies residues 213–252 (VAEEAAAAEEGEEEEVKEEVTEGQAEATEWAEENADNVEW).

Belongs to the universal ribosomal protein uS2 family. In terms of assembly, component of the small ribosomal subunit. Mature ribosomes consist of a small (40S) and a large (60S) subunit. The 40S subunit contains about 33 different proteins and 1 molecule of RNA (18S). The 60S subunit contains about 49 different proteins and 3 molecules of RNA (25S, 5.8S and 5S). Interacts with RPS21.

Its subcellular location is the cytoplasm. In terms of biological role, required for the assembly and/or stability of the 40S ribosomal subunit. Required for the processing of the 20S rRNA-precursor to mature 18S rRNA in a late step of the maturation of 40S ribosomal subunits. In Saccharomyces cerevisiae (strain RM11-1a) (Baker's yeast), this protein is Small ribosomal subunit protein uS2B.